The chain runs to 477 residues: Kinesin-like protein KIN-1 (477 aa).

Positions 3–330 constitute a Kinesin motor domain; that stretch reads NVTVCVRFRP…VRFGTRTKLI (328 aa). 86 to 93 contacts ATP; that stretch reads GQTGAGKT. A coiled-coil region spans residues 402–451; it reads QDAASQEVSLLTQAVEELKETVEELTDENERLRGELELAQEAAAAAAAAR.

It belongs to the TRAFAC class myosin-kinesin ATPase superfamily. Kinesin family. KIN-1 subfamily. Widely expressed. Expressed in young roots and leaves, in mature roots, culm, sheath and leaves, and in panicles at various developmental stages. Strongest expression is detected in panicles. In the panicle, expression is detected in anthers, glumme, lemma and palea. In the spikelet, expression is detected in both microsporocyte and the anther walls.

Its subcellular location is the cytoplasm. Functionally, kinesin-like motor protein that exhibits microtubule-stimulated ATPase activity. Plays an essential role in male meiotic chromosomal dynamics, male gametogenesis and anther dehiscence. May play a minor and nonessential role in regulating meiotic spindle formation. This is Kinesin-like protein KIN-1 from Oryza sativa subsp. japonica (Rice).